A 1091-amino-acid chain; its full sequence is Voltage-dependent calcium channel subunit alpha-2/delta-3 (1091 aa).

Positions 1–33 (MAGPGSLCCASRGASALLATALLYAALGDVVRS) are cleaved as a signal peptide. The Extracellular segment spans residues 34-1068 (EQQIPLSVVK…HPEENARECG (1035 aa)). The N-linked (GlcNAc...) asparagine glycan is linked to N166. The 183-residue stretch at 256 to 438 (DVVILVDVSG…ENVMEYLHVL (183 aa)) folds into the VWFA domain. A divalent metal cation is bound by residues D262, S264, and S266. The MIDAS-like motif signature appears at 262-266 (DVSGS). N309 carries an N-linked (GlcNAc...) asparagine glycan. A disulfide bridge connects residues C412 and C1055. In terms of domain architecture, Cache spans 452–549 (WTEAYIDSTL…RPLYEEGKKR (98 aa)). N-linked (GlcNAc...) asparagine glycans are attached at residues N553 and N632. A Phosphotyrosine modification is found at Y924. Residues 1069 to 1089 (GASSLQAQAALLLLPLVSSLF) traverse the membrane as a helical segment. Residues 1090–1091 (SR) are Cytoplasmic-facing.

Belongs to the calcium channel subunit alpha-2/delta family. In terms of assembly, dimer formed of alpha-2-2 and delta-2 chains; disulfide-linked. Voltage-dependent calcium channels are multisubunit complexes, consisting of alpha-1 (CACNA1), alpha-2 (CACNA2D), beta (CACNB) and delta (CACNA2D) subunits in a 1:1:1:1 ratio. In terms of processing, N-glycosylated. May be proteolytically processed into subunits alpha-2-3 and delta-3 that are disulfide-linked. It is however unclear whether such cleavage really takes place in vivo and has a functional role. Brain-specific. Predominantly expressed in the caudate putamen, entorhinal complex, hippocampus and cortex.

It localises to the membrane. Its function is as follows. The alpha-2/delta subunit of voltage-dependent calcium channels regulates calcium current density and activation/inactivation kinetics of the calcium channel. Acts as a regulatory subunit for P/Q-type calcium channel (CACNA1A), N-type (CACNA1B), L-type (CACNA1C OR CACNA1D) but not T-type (CACNA1G). This chain is Voltage-dependent calcium channel subunit alpha-2/delta-3 (Cacna2d3), found in Mus musculus (Mouse).